The chain runs to 396 residues: N-acyl-phosphatidylethanolamine-hydrolyzing phospholipase D (396 aa).

Met1 is modified (N-acetylmethionine). Polar residues-rich tracts occupy residues 1 to 12 (MDENENSQSPAP) and 26 to 37 (NSVQNSGGSESS). Residues 1 to 41 (MDENENSQSPAPSHQYPKETLRKRQNSVQNSGGSESSRLSR) are disordered. Zn(2+)-binding residues include His185 and His187. Position 188 (Tyr188) interacts with an N-acyl-1,2-diacyl-sn-glycero-3-phosphoethanolamine. Residues Asp189, His190, and His253 each contribute to the Zn(2+) site. Lys256 lines the deoxycholate pocket. Asp284 serves as a coordination point for Zn(2+). Residue His321 coordinates an N-acyl-1,2-diacyl-sn-glycero-3-phosphoethanolamine. Residue His343 coordinates Zn(2+). Ala348 is a binding site for deoxycholate.

Belongs to the NAPE-PLD family. Homodimer. Bile acids promote the assembly of inactive monomers into an active dimer and enable catalysis. It depends on Zn(2+) as a cofactor. In terms of tissue distribution, widely expressed. Highest expression in brain, kidney and testis (at protein level). Expressed in adipose tissue (at protein level).

It localises to the golgi apparatus membrane. The protein localises to the early endosome membrane. Its subcellular location is the nucleus envelope. It is found in the nucleus. The protein resides in the nucleoplasm. The enzyme catalyses an N-acyl-1,2-diacyl-sn-glycero-3-phosphoethanolamine + H2O = an N-acylethanolamine + a 1,2-diacyl-sn-glycero-3-phosphate + H(+). It carries out the reaction N-butanoyl-1-hexadecanoyl-2-(9Z,12Z-octadecadienoyl)-sn-glycero-3-phosphoethanolamine + H2O = N-butanoyl ethanolamine + 1-hexadecanoyl-2-(9Z,12Z-octadecadienoyl)-sn-glycero-3-phosphate + H(+). The catalysed reaction is N-hexanoyl-1-hexadecanoyl-2-(9Z,12Z-octadecadienoyl)-sn-glycero-3-phosphoethanolamine + H2O = N-hexanoyl ethanolamine + 1-hexadecanoyl-2-(9Z,12Z-octadecadienoyl)-sn-glycero-3-phosphate + H(+). It catalyses the reaction N-octanoyl-1-hexadecanoyl-2-(9Z,12Z-octadecadienoyl)-sn-glycero-3-phosphoethanolamine + H2O = N-octanoyl ethanolamine + 1-hexadecanoyl-2-(9Z,12Z-octadecadienoyl)-sn-glycero-3-phosphate + H(+). The enzyme catalyses N-decanoyl-1-hexadecanoyl-2-(9Z,12Z-octadecadienoyl)-sn-glycero-3-phosphoethanolamine + H2O = N-decanoyl ethanolamine + 1-hexadecanoyl-2-(9Z,12Z-octadecadienoyl)-sn-glycero-3-phosphate + H(+). It carries out the reaction N-dodecanoyl-1,2-di-(9Z-octadecenoyl)-sn-glycero-3-phosphoethanolamine + H2O = N-dodecanoylethanolamine + 1,2-di-(9Z-octadecenoyl)-sn-glycero-3-phosphate + H(+). The catalysed reaction is N-tetradecanoyl-1,2-di-(9Z-octadecenoyl)-sn-glycero-3-phosphoethanolamine + H2O = N-tetradecanoylethanolamine + 1,2-di-(9Z-octadecenoyl)-sn-glycero-3-phosphate + H(+). It catalyses the reaction N-hexadecanoyl-1,2-di-(9Z-octadecenoyl)-sn-glycero-3-phosphoethanolamine + H2O = N-hexadecanoylethanolamine + 1,2-di-(9Z-octadecenoyl)-sn-glycero-3-phosphate + H(+). The enzyme catalyses N,1-dihexadecanoyl-2-(9Z,12Z-octadecadienoyl)-sn-glycero-3-phosphoethanolamine + H2O = 1-hexadecanoyl-2-(9Z,12Z-octadecadienoyl)-sn-glycero-3-phosphate + N-hexadecanoylethanolamine + H(+). It carries out the reaction N-octadecanoyl-1,2-di-(9Z-octadecenoyl)-sn-glycero-3-phosphoethanolamine + H2O = N-octadecanoyl ethanolamine + 1,2-di-(9Z-octadecenoyl)-sn-glycero-3-phosphate + H(+). The catalysed reaction is N,1,2-tri-(9Z-octadecenoyl)-sn-glycero-3-phosphoethanolamine + H2O = N-(9Z-octadecenoyl) ethanolamine + 1,2-di-(9Z-octadecenoyl)-sn-glycero-3-phosphate + H(+). It catalyses the reaction N-(5Z,8Z,11Z,14Z-eicosatetraenoyl)-1,2-diacyl-sn-glycero-3-phosphoethanolamine + H2O = N-(5Z,8Z,11Z,14Z-eicosatetraenoyl)-ethanolamine + a 1,2-diacyl-sn-glycero-3-phosphate + H(+). The enzyme catalyses N-(5Z,8Z,11Z,14Z-eicosatetraenoyl)-1,2-di-(9Z-octadecenoyl)-sn-glycero-3-phosphoethanolamine + H2O = N-(5Z,8Z,11Z,14Z-eicosatetraenoyl)-ethanolamine + 1,2-di-(9Z-octadecenoyl)-sn-glycero-3-phosphate + H(+). It carries out the reaction 1-O-(1Z-octadecenoyl)-2-(9Z-octadecenoyl)-sn-glycero-3-phospho-N-hexadecanoyl-ethanolamine + H2O = 1-O-(1Z-octadecenoyl)-2-(9Z-octadecenoyl)-sn-glycero-3-phosphate + N-hexadecanoylethanolamine + H(+). The catalysed reaction is N,1-diacyl-sn-glycero-3-phosphoethanolamine + H2O = an N-acylethanolamine + a 1-acyl-sn-glycero-3-phosphate + H(+). It catalyses the reaction N,1-dihexadecanoyl-sn-glycero-3-phosphoethanolamine + H2O = N-hexadecanoylethanolamine + 1-hexadecanoyl-sn-glycero-3-phosphate + H(+). The enzyme catalyses N-(5Z,8Z,11Z,14Z-eicosatetraenoyl)-1-(9Z-octadecenoyl)-sn-glycero-3-phosphoethanolamine + H2O = N-(5Z,8Z,11Z,14Z-eicosatetraenoyl)-ethanolamine + 1-(9Z-octadecenoyl)-sn-glycero-3-phosphate + H(+). Its activity is regulated as follows. Activated by divalent cations. Activated by bile acids. Activated by membrane phospholipids such as phosphatidylethanolamines. Inhibited by cardiolipins. D-type phospholipase that hydrolyzes N-acyl-phosphatidylethanolamines (NAPEs) to produce bioactive N-acylethanolamines/fatty acid ethanolamides (NAEs/FAEs) and phosphatidic acid. Cleaves the terminal phosphodiester bond of diacyl- and alkenylacyl-NAPEs, primarily playing a role in the generation of long-chain saturated and monounsaturated NAEs in the brain. May control NAPE homeostasis in dopaminergic neuron membranes and regulate neuron survival, partly through RAC1 activation. As a regulator of lipid metabolism in the adipose tissue, mediates the crosstalk between adipocytes, gut microbiota and immune cells to control body temperature and weight. In particular, regulates energy homeostasis by promoting cold-induced brown or beige adipocyte differentiation program to generate heat from fatty acids and glucose. Has limited D-type phospholipase activity toward N-acyl lyso-NAPEs. This is N-acyl-phosphatidylethanolamine-hydrolyzing phospholipase D (Napepld) from Rattus norvegicus (Rat).